A 178-amino-acid chain; its full sequence is MKSELTVPLIQLAPWRVPADCELPEALRPWLLEADSMTRRLRHHNRHFSVQLLGNRSVTLCADEQQLVAAEQPMGLCREVILHGDRGPAVLGWTLFAEAALQESGLRELGEQPLGERIFGDEPARRDHLQLACFEIASNPWCPAATVWGRRSRLFLGQWPLLVHELFLPSLSCNKELE.

Substrate is bound by residues Met37, Arg78, Leu114, and Glu165.

This sequence belongs to the UbiC family.

It localises to the cytoplasm. The catalysed reaction is chorismate = 4-hydroxybenzoate + pyruvate. The protein operates within cofactor biosynthesis; ubiquinone biosynthesis. Removes the pyruvyl group from chorismate, with concomitant aromatization of the ring, to provide 4-hydroxybenzoate (4HB) for the ubiquinone pathway. This is Probable chorismate pyruvate-lyase from Aeromonas salmonicida (strain A449).